Here is a 256-residue protein sequence, read N- to C-terminus: Thiazole synthase (256 aa).

Lys95 acts as the Schiff-base intermediate with DXP in catalysis. 1-deoxy-D-xylulose 5-phosphate is bound by residues Gly156, 182-183 (AG), and 204-205 (NT).

Belongs to the ThiG family. Homotetramer. Forms heterodimers with either ThiH or ThiS.

The protein localises to the cytoplasm. It catalyses the reaction [ThiS sulfur-carrier protein]-C-terminal-Gly-aminoethanethioate + 2-iminoacetate + 1-deoxy-D-xylulose 5-phosphate = [ThiS sulfur-carrier protein]-C-terminal Gly-Gly + 2-[(2R,5Z)-2-carboxy-4-methylthiazol-5(2H)-ylidene]ethyl phosphate + 2 H2O + H(+). It functions in the pathway cofactor biosynthesis; thiamine diphosphate biosynthesis. Functionally, catalyzes the rearrangement of 1-deoxy-D-xylulose 5-phosphate (DXP) to produce the thiazole phosphate moiety of thiamine. Sulfur is provided by the thiocarboxylate moiety of the carrier protein ThiS. In vitro, sulfur can be provided by H(2)S. This is Thiazole synthase from Escherichia fergusonii (strain ATCC 35469 / DSM 13698 / CCUG 18766 / IAM 14443 / JCM 21226 / LMG 7866 / NBRC 102419 / NCTC 12128 / CDC 0568-73).